A 400-amino-acid polypeptide reads, in one-letter code: Argininosuccinate synthase (400 aa).

Residues 10–18 (AYSGGVDTS) and alanine 38 contribute to the ATP site. Residue tyrosine 89 coordinates L-citrulline. Residue glycine 119 participates in ATP binding. Residues threonine 121, asparagine 125, and aspartate 126 each coordinate L-aspartate. Asparagine 125 is an L-citrulline binding site. 5 residues coordinate L-citrulline: arginine 129, serine 177, serine 186, glutamate 262, and tyrosine 274.

This sequence belongs to the argininosuccinate synthase family. Type 1 subfamily. As to quaternary structure, homotetramer.

It is found in the cytoplasm. It carries out the reaction L-citrulline + L-aspartate + ATP = 2-(N(omega)-L-arginino)succinate + AMP + diphosphate + H(+). It participates in amino-acid biosynthesis; L-arginine biosynthesis; L-arginine from L-ornithine and carbamoyl phosphate: step 2/3. This chain is Argininosuccinate synthase, found in Prochlorococcus marinus (strain NATL1A).